We begin with the raw amino-acid sequence, 504 residues long: ATP synthase subunit alpha (504 aa).

ATP is bound at residue 169–176; sequence GDRQIGKT.

The protein belongs to the ATPase alpha/beta chains family. As to quaternary structure, F-type ATPases have 2 components, CF(1) - the catalytic core - and CF(0) - the membrane proton channel. CF(1) has five subunits: alpha(3), beta(3), gamma(1), delta(1), epsilon(1). CF(0) has three main subunits: a(1), b(2) and c(9-12). The alpha and beta chains form an alternating ring which encloses part of the gamma chain. CF(1) is attached to CF(0) by a central stalk formed by the gamma and epsilon chains, while a peripheral stalk is formed by the delta and b chains.

It is found in the cell membrane. The enzyme catalyses ATP + H2O + 4 H(+)(in) = ADP + phosphate + 5 H(+)(out). In terms of biological role, produces ATP from ADP in the presence of a proton gradient across the membrane. The alpha chain is a regulatory subunit. The polypeptide is ATP synthase subunit alpha (Syntrophomonas wolfei subsp. wolfei (strain DSM 2245B / Goettingen)).